Here is a 376-residue protein sequence, read N- to C-terminus: Erythronate-4-phosphate dehydrogenase (376 aa).

Substrate-binding residues include serine 45 and threonine 67. Residue aspartate 147 participates in NAD(+) binding. Arginine 209 is an active-site residue. Residue aspartate 233 coordinates NAD(+). Residue glutamate 238 is part of the active site. Histidine 255 (proton donor) is an active-site residue. Glycine 258 contacts NAD(+). Tyrosine 259 contacts substrate.

Belongs to the D-isomer specific 2-hydroxyacid dehydrogenase family. PdxB subfamily. In terms of assembly, homodimer.

The protein resides in the cytoplasm. The enzyme catalyses 4-phospho-D-erythronate + NAD(+) = (R)-3-hydroxy-2-oxo-4-phosphooxybutanoate + NADH + H(+). The protein operates within cofactor biosynthesis; pyridoxine 5'-phosphate biosynthesis; pyridoxine 5'-phosphate from D-erythrose 4-phosphate: step 2/5. In terms of biological role, catalyzes the oxidation of erythronate-4-phosphate to 3-hydroxy-2-oxo-4-phosphonooxybutanoate. This chain is Erythronate-4-phosphate dehydrogenase, found in Shewanella sp. (strain MR-4).